A 138-amino-acid chain; its full sequence is Mini-ribonuclease 3 (138 aa).

Asp33 is a catalytic residue.

This sequence belongs to the MrnC RNase family. Homodimer. Mg(2+) is required as a cofactor.

Its subcellular location is the cytoplasm. Functionally, involved in correct processing of both the 5' and 3' ends of 23S rRNA precursor. Processes 30S rRNA precursor transcript even in absence of ribonuclease 3 (Rnc); Rnc processes 30S rRNA into smaller rRNA precursors. This chain is Mini-ribonuclease 3, found in Synechococcus sp. (strain ATCC 27144 / PCC 6301 / SAUG 1402/1) (Anacystis nidulans).